We begin with the raw amino-acid sequence, 99 residues long: RNA-binding protein Hfq (99 aa).

A Sm domain is found at 9–68; it reads DPFLNALRRERVPVSIYLVNGIKLQGQIESFDQFVILLKNTVSQMVYKHAISTVVPSRPV. A disordered region spans residues 64–99; it reads PSRPVSHHSNNPGGGSNYHGNNTAASQQSQEADDAE.

The protein belongs to the Hfq family. In terms of assembly, homohexamer.

Functionally, RNA chaperone that binds small regulatory RNA (sRNAs) and mRNAs to facilitate mRNA translational regulation in response to envelope stress, environmental stress and changes in metabolite concentrations. Also binds with high specificity to tRNAs. The sequence is that of RNA-binding protein Hfq from Pectobacterium carotovorum subsp. carotovorum (strain PC1).